A 795-amino-acid polypeptide reads, in one-letter code: Copper-exporting P-type ATPase (795 aa).

2 consecutive HMA domains span residues 5–70 (QNAT…YDVV) and 72–138 (DKAE…YDAQ). Cu(+) contacts are provided by C16, C19, C83, and C86. 6 helical membrane-spanning segments follow: residues 161-181 (LMISTILSLPLLMTMLVHLFN), 187-207 (ILMNPWFQFILATPIQFIIGW), 224-244 (MDVLVALGTSAAYFYSIYEMI), 256-276 (LYFETSAVLITLILFGKYLEA), 412-432 (YFVPIVIAIALLTFLIWITLV), and 440-460 (ALVAAISVLVIACPCALGLAT). The 4-aspartylphosphate intermediate role is filled by D496. Residues D690 and D694 each contribute to the Mg(2+) site. A run of 2 helical transmembrane segments spans residues 747–764 (NLFWAFGYNIAGIPIAAM) and 770–788 (WIAGAAMALSSVSVVSNAL).

It belongs to the cation transport ATPase (P-type) (TC 3.A.3) family. Type IB subfamily.

It is found in the cell membrane. It catalyses the reaction Cu(+)(in) + ATP + H2O = Cu(+)(out) + ADP + phosphate + H(+). In terms of biological role, involved in copper export. This Staphylococcus haemolyticus (strain JCSC1435) protein is Copper-exporting P-type ATPase (copA).